Reading from the N-terminus, the 901-residue chain is Probable inorganic carbon transporter subunit DabA (901 aa).

4 residues coordinate Zn(2+): Cys424, Asp426, His606, and Cys621.

It belongs to the inorganic carbon transporter (TC 9.A.2) DabA family. As to quaternary structure, forms a complex with DabB. Zn(2+) serves as cofactor.

The protein localises to the cell membrane. Part of an energy-coupled inorganic carbon pump. This is Probable inorganic carbon transporter subunit DabA from Staphylococcus aureus (strain MRSA252).